The following is a 98-amino-acid chain: Tan_12Cys (98 aa).

The signal sequence occupies residues 1 to 21 (MNLKVLFLLAMVLVTLCLGED). A propeptide spanning residues 22–28 (RVTDRRK) is cleaved from the precursor.

This sequence belongs to the teretoxin C (TC) superfamily. Contains 6 disulfide bonds. In terms of tissue distribution, expressed by the venom duct.

The protein localises to the secreted. This is Tan_12Cys from Terebra anilis (Auger snail).